A 465-amino-acid chain; its full sequence is Cysteine--tRNA ligase (465 aa).

C30 is a Zn(2+) binding site. The short motif at 32–42 (ITVYDYCHVGH) is the 'HIGH' region element. Zn(2+) is bound by residues C214, H239, and E243. Positions 271–275 (KMSKS) match the 'KMSKS' region motif. K274 contributes to the ATP binding site.

Belongs to the class-I aminoacyl-tRNA synthetase family. As to quaternary structure, monomer. The cofactor is Zn(2+).

Its subcellular location is the cytoplasm. It carries out the reaction tRNA(Cys) + L-cysteine + ATP = L-cysteinyl-tRNA(Cys) + AMP + diphosphate. The sequence is that of Cysteine--tRNA ligase from Burkholderia cenocepacia (strain ATCC BAA-245 / DSM 16553 / LMG 16656 / NCTC 13227 / J2315 / CF5610) (Burkholderia cepacia (strain J2315)).